The following is a 153-amino-acid chain: Ribosome maturation factor RimP (153 aa).

The protein belongs to the RimP family.

It localises to the cytoplasm. Functionally, required for maturation of 30S ribosomal subunits. The sequence is that of Ribosome maturation factor RimP from Synechococcus elongatus (strain ATCC 33912 / PCC 7942 / FACHB-805) (Anacystis nidulans R2).